The sequence spans 220 residues: Probable 26S proteasome regulatory subunit p27 (220 aa).

The 78-residue stretch at 119-196 folds into the PDZ domain; the sequence is ARRNNDDQAI…PVLLLREGQI (78 aa).

It belongs to the proteasome subunit p27 family. As to quaternary structure, part of a transient complex containing NAS2, RPT4 and RPT5 formed during the assembly of the 26S proteasome.

Its function is as follows. Acts as a chaperone during the assembly of the 26S proteasome, specifically of the base subcomplex of the 19S regulatory complex (RC). During the base subcomplex assembly is part of a NAS2:RPT4:RPT5 module; NAS2 is released during the further base assembly process. In Saccharomyces cerevisiae (strain ATCC 204508 / S288c) (Baker's yeast), this protein is Probable 26S proteasome regulatory subunit p27 (NAS2).